Here is a 333-residue protein sequence, read N- to C-terminus: Oxidoreductase AN1596 (333 aa).

The protein belongs to the NmrA-type oxidoreductase family.

It functions in the pathway secondary metabolite biosynthesis; terpenoid biosynthesis. In terms of biological role, oxidoreductase; part of the gene cluster that mediates the biosynthesis of the diterpene ent-pimara-8(14),15-diene (PD). Within the cluster, the HMG-CoA reductase AN1593 functions in the mevalonate pathway, which produces isoprenoid precursors. The geranylgeranyl pyrophosphate (GGPP) synthase AN1592 is needed in the formation of GGPP, the precursor for diterpenes. Lastly, the pimaradiene synthase pbcA performs the 2 cyclization steps that convert GGPP to ent-pimara-8(14),15-diene. The putative roles of the remaining cluster enzymes in ent-pimara-8(14),15-diene biosynthesis is unclear. The cytochrome P450 monooxygenase AN1598, the glutathione S-transferase AN1595, the oxidoreductases AN1596 and AN1597 probably function as decorative enzymes. It is possible that in biological conditions the compound is oxidized to ent-pimara-8(14),15-dien-19-oic acid, which is a bioactive diterpene compound predominant in many plant extracts. This is Oxidoreductase AN1596 from Emericella nidulans (strain FGSC A4 / ATCC 38163 / CBS 112.46 / NRRL 194 / M139) (Aspergillus nidulans).